Here is a 200-residue protein sequence, read N- to C-terminus: Glycerol-3-phosphate acyltransferase (200 aa).

5 helical membrane-spanning segments follow: residues 3 to 23, 50 to 70, 75 to 95, 109 to 129, and 134 to 154; these read YIYS…FFIA, FYGA…VFLV, IKFM…SIFL, VFLA…LFIV, and YVSL…FFAG.

This sequence belongs to the PlsY family. In terms of assembly, probably interacts with PlsX.

It is found in the cell inner membrane. The enzyme catalyses an acyl phosphate + sn-glycerol 3-phosphate = a 1-acyl-sn-glycero-3-phosphate + phosphate. It participates in lipid metabolism; phospholipid metabolism. Its function is as follows. Catalyzes the transfer of an acyl group from acyl-phosphate (acyl-PO(4)) to glycerol-3-phosphate (G3P) to form lysophosphatidic acid (LPA). This enzyme utilizes acyl-phosphate as fatty acyl donor, but not acyl-CoA or acyl-ACP. The polypeptide is Glycerol-3-phosphate acyltransferase (Thermosipho melanesiensis (strain DSM 12029 / CIP 104789 / BI429)).